An 87-amino-acid polypeptide reads, in one-letter code: U3-theraphotoxin-Hhn1b (87 aa).

Residues 1-24 (MVNMKASMFLTFAGLVLLFVVCYA) form the signal peptide. Residues 25-52 (SESEEKEFPREMLSSIFAVDNDFKQEER) constitute a propeptide that is removed on maturation. 2 disulfides stabilise this stretch: Cys-54–Cys-67 and Cys-61–Cys-72.

This sequence belongs to the neurotoxin 10 (Hwtx-1) family. 51 (Hntx-8) subfamily. Hntx-8 sub-subfamily. As to expression, expressed by the venom gland.

The protein localises to the secreted. Ion channel inhibitor. The protein is U3-theraphotoxin-Hhn1b of Cyriopagopus hainanus (Chinese bird spider).